A 292-amino-acid polypeptide reads, in one-letter code: Ribosomal protein L11 methyltransferase (292 aa).

Positions 144, 165, 187, and 229 each coordinate S-adenosyl-L-methionine.

This sequence belongs to the methyltransferase superfamily. PrmA family.

The protein localises to the cytoplasm. It catalyses the reaction L-lysyl-[protein] + 3 S-adenosyl-L-methionine = N(6),N(6),N(6)-trimethyl-L-lysyl-[protein] + 3 S-adenosyl-L-homocysteine + 3 H(+). In terms of biological role, methylates ribosomal protein L11. The polypeptide is Ribosomal protein L11 methyltransferase (Azotobacter vinelandii (strain DJ / ATCC BAA-1303)).